The primary structure comprises 312 residues: Thioredoxin reductase (312 aa).

FAD is bound at residue 33–43 (EGFFSGIAGGQ). Cys-138 and Cys-141 are oxidised to a cystine. FAD is bound at residue 283-292 (DVQDKYYRQA).

It belongs to the class-II pyridine nucleotide-disulfide oxidoreductase family. In terms of assembly, homodimer. Requires FAD as cofactor.

It localises to the cytoplasm. The enzyme catalyses [thioredoxin]-dithiol + NADP(+) = [thioredoxin]-disulfide + NADPH + H(+). This is Thioredoxin reductase (trxB) from Chlamydia trachomatis serovar D (strain ATCC VR-885 / DSM 19411 / UW-3/Cx).